The chain runs to 106 residues: MSTAIAQQKIRIRLKAFDRRMLDLSCDKIIETADNTAATAIGPIPLPTKRKIYCVLRSPHVDKDSREHFETRTHRRIIDIYSPSAKTIDALMKLDLPSGVDIEVKL.

The protein belongs to the universal ribosomal protein uS10 family. Part of the 30S ribosomal subunit.

In terms of biological role, involved in the binding of tRNA to the ribosomes. In Synechococcus sp. (strain CC9311), this protein is Small ribosomal subunit protein uS10.